The chain runs to 248 residues: NAD kinase (248 aa).

Catalysis depends on Asp45, which acts as the Proton acceptor. Residues 45-46 (DG), Arg50, 110-111 (NE), and Asp138 contribute to the NAD(+) site.

Belongs to the NAD kinase family. Requires a divalent metal cation as cofactor.

The protein localises to the cytoplasm. The catalysed reaction is NAD(+) + ATP = ADP + NADP(+) + H(+). Involved in the regulation of the intracellular balance of NAD and NADP, and is a key enzyme in the biosynthesis of NADP. Catalyzes specifically the phosphorylation on 2'-hydroxyl of the adenosine moiety of NAD to yield NADP. This Sulfurisphaera tokodaii (strain DSM 16993 / JCM 10545 / NBRC 100140 / 7) (Sulfolobus tokodaii) protein is NAD kinase.